Here is an 886-residue protein sequence, read N- to C-terminus: Methanogenesis regulatory histidine kinase FilI (886 aa).

2 consecutive transmembrane segments (helical) span residues I7–C27 and V270–L290. An HAMP domain is found at L290–Q344. One can recognise a PAS domain in the interval S349–E419. A PAC domain is found at F421–K473. Residues T674–P886 enclose the Histidine kinase domain. H677 carries the phosphohistidine; by autocatalysis modification.

In terms of processing, autophosphorylated.

The protein localises to the cell membrane. It carries out the reaction ATP + protein L-histidine = ADP + protein N-phospho-L-histidine.. Its function is as follows. Member of the two-component regulatory system FilI/FilRs, which is involved in the regulation of methanogenesis. Autophosphorylates and specifically transfers the phosphoryl group to both FilR1 and FilR2. Functionally, could also catalyze the synthesis of the quorum sensing (QS) signal molecules carboxyl-acyl homoserine lactones (AHLs), which regulate the transition of the cellular morphology from short cells to filaments and of the carbon metabolic flux from biomass formation to methane production. The polypeptide is Methanogenesis regulatory histidine kinase FilI (Methanothrix harundinacea (strain 6Ac) (Methanosaeta harundinacea)).